Here is a 350-residue protein sequence, read N- to C-terminus: 2,5-dihydroxypyridine 5,6-dioxygenase (350 aa).

The Fe cation site is built by histidine 265, histidine 318, and aspartate 320.

Fe(2+) serves as cofactor.

The enzyme catalyses 2,5-dihydroxypyridine + O2 = N-formylmaleamate + H(+). Its pathway is cofactor degradation; nicotinate degradation. Functionally, catalyzes the dioxygenolytic ring cleavage of 2,5-dihydroxypyridine between carbons 5 and 6 generating N-formylmaleamate in the aerobic nicotinate degradation pathway. The protein is 2,5-dihydroxypyridine 5,6-dioxygenase (nicX) of Pseudomonas putida (strain ATCC 47054 / DSM 6125 / CFBP 8728 / NCIMB 11950 / KT2440).